The chain runs to 127 residues: Small ribosomal subunit protein uS13 (127 aa).

The segment at 96-127 is disordered; the sequence is LPCHGQRTSTNARTRKGPKRTAVKKKGAAKKK. The segment covering 108–127 has biased composition (basic residues); that stretch reads RTRKGPKRTAVKKKGAAKKK.

The protein belongs to the universal ribosomal protein uS13 family. Part of the 30S ribosomal subunit. Forms a loose heterodimer with protein S19. Forms two bridges to the 50S subunit in the 70S ribosome.

Located at the top of the head of the 30S subunit, it contacts several helices of the 16S rRNA. In the 70S ribosome it contacts the 23S rRNA (bridge B1a) and protein L5 of the 50S subunit (bridge B1b), connecting the 2 subunits; these bridges are implicated in subunit movement. Contacts the tRNAs in the A and P-sites. The protein is Small ribosomal subunit protein uS13 of Desulfosudis oleivorans (strain DSM 6200 / JCM 39069 / Hxd3) (Desulfococcus oleovorans).